Here is a 1272-residue protein sequence, read N- to C-terminus: AF4/FMR2 family member 2 (1272 aa).

Disordered regions lie at residues 93-183, 201-225, and 283-302; these read IPKN…LTQD, QIGE…GEDA, and AYVR…PTLK. Positions 97-107 are enriched in polar residues; it reads SVPQNPNNKNE. A compositionally biased stretch (basic and acidic residues) spans 151 to 160; sequence SKPEWSRDSH. The segment covering 161 to 183 has biased composition (polar residues); that stretch reads NPSTVLASQASGQPNKMQTLTQD. S391 bears the Phosphoserine mark. Disordered regions lie at residues 418–491, 535–687, 779–829, and 842–903; these read KAKP…KWQL, TNAS…DQEE, SLHA…PEKK, and PPCI…QDKN. Residues 426–438 show a composition bias toward pro residues; sequence VNPPLATPQPPPA. Residues 439-452 are compositionally biased toward low complexity; the sequence is VQASGGSGSSSESE. Phosphothreonine is present on T478. Basic and acidic residues predominate over residues 543-558; sequence EPKERPLLSLIREKAR. Residues 576–586 are compositionally biased toward polar residues; it reads STTSETVSQRT. Residues 616–629 are compositionally biased toward basic and acidic residues; sequence PKEKESVELHDPPR. A compositionally biased stretch (basic residues) spans 630–640; that stretch reads GRNKATAHKPA. Positions 818 to 829 are enriched in basic and acidic residues; it reads PTEVAEKIPEKK. Pro residues-rich tracts occupy residues 844-853 and 874-883; these read CISPAPPHKP and FPPPLSPLPE.

Belongs to the AF4 family.

It is found in the nucleus speckle. RNA-binding protein. Might be involved in alternative splicing regulation through an interaction with G-quartet RNA structure. The polypeptide is AF4/FMR2 family member 2 (AFF2) (Pan troglodytes (Chimpanzee)).